We begin with the raw amino-acid sequence, 283 residues long: MRTQWPSPAKLNLFLYITGQRADGYHTLQTLFQFLDYGDTISIELRDNGDIRLLTPVEGVEHEDNLIVRAARLLMKTAADSGRLPTGSGANISIDKRLPMGGGLGGGSSNAATVLVALNHLWQCGLSMDELAEMGLTLGADVPVFVRGHAAFAEGVGEILTPVDPPEKWYLVAHPGVSIPTPVIFKDPELPRNTPKRSIETLLKCEFSNDCEVIARKRFREVDAVLSWLLEYAPSRLTGTGACVFAEFDTESEARQVLEQAPEWLNGFVAKGVNLSPLHRAML.

The active site involves lysine 10. 99-109 (PMGGGLGGGSS) is a binding site for ATP. Residue aspartate 141 is part of the active site.

This sequence belongs to the GHMP kinase family. IspE subfamily. Homodimer.

The catalysed reaction is 4-CDP-2-C-methyl-D-erythritol + ATP = 4-CDP-2-C-methyl-D-erythritol 2-phosphate + ADP + H(+). It functions in the pathway isoprenoid biosynthesis; isopentenyl diphosphate biosynthesis via DXP pathway; isopentenyl diphosphate from 1-deoxy-D-xylulose 5-phosphate: step 3/6. Catalyzes the phosphorylation of the position 2 hydroxy group of 4-diphosphocytidyl-2C-methyl-D-erythritol. The chain is 4-diphosphocytidyl-2-C-methyl-D-erythritol kinase from Shigella dysenteriae serotype 1 (strain Sd197).